Reading from the N-terminus, the 356-residue chain is 4-hydroxy-2-oxovalerate aldolase (356 aa).

Positions 7–257 (PRVTDTTLRD…NPGLDVFKLM (251 aa)) constitute a Pyruvate carboxyltransferase domain. 15–16 (RD) serves as a coordination point for substrate. Mn(2+) is bound at residue aspartate 16. Catalysis depends on histidine 19, which acts as the Proton acceptor. Substrate is bound by residues serine 169 and histidine 196. The Mn(2+) site is built by histidine 196 and histidine 198. Substrate is bound at residue tyrosine 287.

This sequence belongs to the 4-hydroxy-2-oxovalerate aldolase family.

The enzyme catalyses (S)-4-hydroxy-2-oxopentanoate = acetaldehyde + pyruvate. The polypeptide is 4-hydroxy-2-oxovalerate aldolase (Thermomicrobium roseum (strain ATCC 27502 / DSM 5159 / P-2)).